The chain runs to 383 residues: Putative [LysW]-aminoadipate semialdehyde/glutamate semialdehyde transaminase (383 aa).

Pyridoxal 5'-phosphate-binding positions include 97–98 (GT) and Phe-124. Arg-127 provides a ligand contact to substrate. Pyridoxal 5'-phosphate is bound at residue 209-212 (DEVQ). An N6-(pyridoxal phosphate)lysine modification is found at Lys-238. Residue Ser-266 coordinates substrate. Position 267 (Thr-267) interacts with pyridoxal 5'-phosphate.

It belongs to the class-III pyridoxal-phosphate-dependent aminotransferase family. LysJ subfamily. In terms of assembly, homodimer. Pyridoxal 5'-phosphate serves as cofactor.

It localises to the cytoplasm. It carries out the reaction [amino-group carrier protein]-C-terminal-gamma-(L-lysyl)-L-glutamate + 2-oxoglutarate = [amino-group carrier protein]-C-terminal-N-(1-carboxy-5-oxopentan-1-yl)-L-glutamine + L-glutamate. The enzyme catalyses [amino-group carrier protein]-C-terminal-gamma-(L-ornithyl)-L-glutamate + 2-oxoglutarate = [amino-group carrier protein]-C-terminal-gamma-(L-glutamyl-5-semialdehyde)-L-glutamate + L-glutamate. It participates in amino-acid biosynthesis; L-lysine biosynthesis via AAA pathway; L-lysine from L-alpha-aminoadipate (Thermus route): step 4/5. Its pathway is amino-acid biosynthesis; L-arginine biosynthesis. Functionally, involved in both the arginine and lysine biosynthetic pathways. This is Putative [LysW]-aminoadipate semialdehyde/glutamate semialdehyde transaminase from Pyrobaculum aerophilum (strain ATCC 51768 / DSM 7523 / JCM 9630 / CIP 104966 / NBRC 100827 / IM2).